We begin with the raw amino-acid sequence, 277 residues long: Diaminopimelate epimerase (277 aa).

Residues asparagine 11 and asparagine 62 each contribute to the substrate site. The Proton donor role is filled by cysteine 71. Substrate-binding positions include 72-73, asparagine 160, asparagine 193, and 211-212; these read GN and ER. The active-site Proton acceptor is the cysteine 220. 221–222 contributes to the substrate binding site; the sequence is GT.

It belongs to the diaminopimelate epimerase family. Homodimer.

It is found in the cytoplasm. It carries out the reaction (2S,6S)-2,6-diaminopimelate = meso-2,6-diaminopimelate. The protein operates within amino-acid biosynthesis; L-lysine biosynthesis via DAP pathway; DL-2,6-diaminopimelate from LL-2,6-diaminopimelate: step 1/1. Functionally, catalyzes the stereoinversion of LL-2,6-diaminopimelate (L,L-DAP) to meso-diaminopimelate (meso-DAP), a precursor of L-lysine. In Methanococcus maripaludis (strain DSM 14266 / JCM 13030 / NBRC 101832 / S2 / LL), this protein is Diaminopimelate epimerase.